The chain runs to 272 residues: 1,4-dihydroxy-2-naphthoyl-CoA synthase (272 aa).

Residues Arg-33, 72-76, Tyr-84, 116-120, Thr-142, Ser-148, Tyr-245, and Lys-260 contribute to the substrate site; these read SGGDQ and YAIGG. 141–143 contacts hydrogencarbonate; sequence QTG. The span at 253–264 shows a compositional bias: basic and acidic residues; that stretch reads GRDAFKEKRDPD. The disordered stretch occupies residues 253–272; the sequence is GRDAFKEKRDPDFDQFPKFP.

This sequence belongs to the enoyl-CoA hydratase/isomerase family. MenB subfamily. It depends on hydrogencarbonate as a cofactor.

It catalyses the reaction 2-succinylbenzoyl-CoA + H(+) = 1,4-dihydroxy-2-naphthoyl-CoA + H2O. The protein operates within quinol/quinone metabolism; 1,4-dihydroxy-2-naphthoate biosynthesis; 1,4-dihydroxy-2-naphthoate from chorismate: step 6/7. It participates in quinol/quinone metabolism; menaquinone biosynthesis. Functionally, converts o-succinylbenzoyl-CoA (OSB-CoA) to 1,4-dihydroxy-2-naphthoyl-CoA (DHNA-CoA). The chain is 1,4-dihydroxy-2-naphthoyl-CoA synthase from Staphylococcus saprophyticus subsp. saprophyticus (strain ATCC 15305 / DSM 20229 / NCIMB 8711 / NCTC 7292 / S-41).